The following is a 573-amino-acid chain: Potassium-transporting ATPase potassium-binding subunit (573 aa).

10 consecutive transmembrane segments (helical) span residues 6–26 (ILFA…GSYI), 66–86 (FFSL…ILLL), 135–155 (ALAV…IALI), 177–197 (VFWI…FQGV), 257–277 (IQMV…GKWV), 283–303 (GWLI…VMTI), 382–402 (IFGG…LAVF), 428–448 (MFAL…AAVI), 493–513 (ITIA…VIML), and 537–557 (FIFA…TIFP).

This sequence belongs to the KdpA family. As to quaternary structure, the system is composed of three essential subunits: KdpA, KdpB and KdpC.

It localises to the cell inner membrane. Part of the high-affinity ATP-driven potassium transport (or Kdp) system, which catalyzes the hydrolysis of ATP coupled with the electrogenic transport of potassium into the cytoplasm. This subunit binds the periplasmic potassium ions and delivers the ions to the membrane domain of KdpB through an intramembrane tunnel. This Francisella tularensis subsp. mediasiatica (strain FSC147) protein is Potassium-transporting ATPase potassium-binding subunit.